We begin with the raw amino-acid sequence, 184 residues long: Ras-related protein Rap-1b (184 aa).

GTP is bound at residue 10 to 18 (GSGGVGKSA). Residues 25–67 (QGIFVEKYDPTIEDSYRKQVEVDAQQCMLEILDTAGTEQFTAM) are interaction with KRIT1. An Effector region motif is present at residues 32–40 (YDPTIEDSY). Residue Ser39 is modified to ADP-ribosylserine; by botulinum toxin. GTP is bound by residues 57–61 (DTAGT), 116–119 (NKCD), and 147–149 (SAK). Phosphoserine; by PKA is present on Ser179. A Cysteine methyl ester modification is found at Cys181. A lipid anchor (S-geranylgeranyl cysteine) is attached at Cys181. The propeptide at 182-184 (QLL) is removed in mature form.

Belongs to the small GTPase superfamily. Ras family. Heterodimer with RAP1GAP. Interacts with EPAC2. Interacts with SGSM1. Interacts with SGSM2. Interacts with SGSM3. Interacts with KRIT1. Interacts with RAP1GDS1.

The protein resides in the cell membrane. It is found in the cytoplasm. Its subcellular location is the cytosol. The protein localises to the cell junction. The catalysed reaction is GTP + H2O = GDP + phosphate + H(+). Its activity is regulated as follows. Activated by guanine nucleotide-exchange factor (GEF) EPAC2 in a cAMP-dependent manner. GTP-binding protein that possesses intrinsic GTPase activity. Contributes to the polarizing activity of KRIT1 and CDH5 in the establishment and maintenance of correct endothelial cell polarity and vascular lumen. Required for the localization of phosphorylated PRKCZ, PARD3 and TIAM1 to the cell junction. Plays a role in the establishment of basal endothelial barrier function. The polypeptide is Ras-related protein Rap-1b (Rap1b) (Rattus norvegicus (Rat)).